The following is a 299-amino-acid chain: GTPase Era (299 aa).

One can recognise an Era-type G domain in the interval 4 to 171; that stretch reads KSGFVAILGR…VDILSENLDE (168 aa). Residues 12–19 are G1; sequence GRPNVGKS. A GTP-binding site is contributed by 12–19; sequence GRPNVGKS. A G2 region spans residues 38–42; it reads QTTRN. Positions 59-62 are G3; it reads DTPG. Residues 59–63 and 121–124 contribute to the GTP site; these read DTPGI and NKID. The segment at 121–124 is G4; that stretch reads NKID. The tract at residues 150-152 is G5; the sequence is ISA. Residues 202–280 enclose the KH type-2 domain; the sequence is TREEIPHSVA…FLETWVKVKK (79 aa).

The protein belongs to the TRAFAC class TrmE-Era-EngA-EngB-Septin-like GTPase superfamily. Era GTPase family. As to quaternary structure, monomer.

Its subcellular location is the cytoplasm. The protein localises to the cell membrane. An essential GTPase that binds both GDP and GTP, with rapid nucleotide exchange. Plays a role in 16S rRNA processing and 30S ribosomal subunit biogenesis and possibly also in cell cycle regulation and energy metabolism. In Streptococcus pneumoniae (strain P1031), this protein is GTPase Era.